A 470-amino-acid polypeptide reads, in one-letter code: Protein ASPARTIC PROTEASE IN GUARD CELL 2 (470 aa).

The signal sequence occupies residues 1-19 (MLLPLFFFFLHLHLHLSSS). In terms of domain architecture, Peptidase A1 spans 131 to 466 (YFVRIGVGSP…DGANGFVGFG (336 aa)). The active site involves Asp-149. Cystine bridges form between Cys-159–Cys-162, Cys-165–Cys-239, Cys-186–Cys-204, Cys-191–Cys-199, Cys-278–Cys-470, and Cys-389–Cys-431. Asp-350 is a catalytic residue.

The protein belongs to the peptidase A1 family.

In terms of biological role, aspartic protease that may be involved in drought avoidance through abscisic acid signaling. The chain is Protein ASPARTIC PROTEASE IN GUARD CELL 2 (ASPG2) from Arabidopsis thaliana (Mouse-ear cress).